Here is a 430-residue protein sequence, read N- to C-terminus: Sulfide-quinone reductase (430 aa).

FAD-binding positions include 9–13 (GGGVG), 34–36 (SDR), 42–43 (TP), and Thr105. Residue Cys156 is the Cysteine persulfide intermediate of the active site. Intrachain disulfides connect Cys280/Cys422 and Cys419/Cys430. FAD contacts are provided by Val294 and Gly314. An a quinone-binding site is contributed by Ile346. Cys347 functions as the Cysteine persulfide intermediate in the catalytic mechanism. Lys382 provides a ligand contact to FAD.

Belongs to the SQRD family. In terms of assembly, homotrimer. FAD is required as a cofactor.

Its subcellular location is the membrane. It catalyses the reaction n a quinone + n hydrogen sulfide + n H(+) = polysulfur(n-2) + n a quinol. In terms of biological role, catalyzes the oxidation of hydrogen sulfide, with the help of a quinone. Consecutive reaction cycles lead to the accumulation of a polysulfide product on the active site Cys residues; these products are released when they exceed a critical length, typically as cyclooctasulfur. The polypeptide is Sulfide-quinone reductase (Aquifex aeolicus (strain VF5)).